Here is a 160-residue protein sequence, read N- to C-terminus: Putative NrdI-like protein (160 aa).

This sequence belongs to the NrdI family.

This is Putative NrdI-like protein from Streptococcus pyogenes serotype M1.